We begin with the raw amino-acid sequence, 427 residues long: Glutamate-1-semialdehyde 2,1-aminomutase (427 aa).

An N6-(pyridoxal phosphate)lysine modification is found at Lys265.

The protein belongs to the class-III pyridoxal-phosphate-dependent aminotransferase family. HemL subfamily. In terms of assembly, homodimer. It depends on pyridoxal 5'-phosphate as a cofactor.

The protein localises to the cytoplasm. The catalysed reaction is (S)-4-amino-5-oxopentanoate = 5-aminolevulinate. It participates in porphyrin-containing compound metabolism; protoporphyrin-IX biosynthesis; 5-aminolevulinate from L-glutamyl-tRNA(Glu): step 2/2. The chain is Glutamate-1-semialdehyde 2,1-aminomutase from Teredinibacter turnerae (strain ATCC 39867 / T7901).